Here is a 311-residue protein sequence, read N- to C-terminus: Homoserine kinase (311 aa).

88-98 (PEGLGLGSSGA) serves as a coordination point for ATP.

It belongs to the GHMP kinase family. Homoserine kinase subfamily.

The protein localises to the cytoplasm. The enzyme catalyses L-homoserine + ATP = O-phospho-L-homoserine + ADP + H(+). Its pathway is amino-acid biosynthesis; L-threonine biosynthesis; L-threonine from L-aspartate: step 4/5. Functionally, catalyzes the ATP-dependent phosphorylation of L-homoserine to L-homoserine phosphate. The polypeptide is Homoserine kinase (Saccharolobus solfataricus (strain ATCC 35092 / DSM 1617 / JCM 11322 / P2) (Sulfolobus solfataricus)).